Reading from the N-terminus, the 190-residue chain is Peptidyl-tRNA hydrolase (190 aa).

Position 18 (tyrosine 18) interacts with tRNA. Histidine 23 serves as the catalytic Proton acceptor. 3 residues coordinate tRNA: phenylalanine 65, asparagine 67, and asparagine 113.

This sequence belongs to the PTH family. In terms of assembly, monomer.

Its subcellular location is the cytoplasm. The enzyme catalyses an N-acyl-L-alpha-aminoacyl-tRNA + H2O = an N-acyl-L-amino acid + a tRNA + H(+). In terms of biological role, hydrolyzes ribosome-free peptidyl-tRNAs (with 1 or more amino acids incorporated), which drop off the ribosome during protein synthesis, or as a result of ribosome stalling. Functionally, catalyzes the release of premature peptidyl moieties from peptidyl-tRNA molecules trapped in stalled 50S ribosomal subunits, and thus maintains levels of free tRNAs and 50S ribosomes. The sequence is that of Peptidyl-tRNA hydrolase from Akkermansia muciniphila (strain ATCC BAA-835 / DSM 22959 / JCM 33894 / BCRC 81048 / CCUG 64013 / CIP 107961 / Muc).